We begin with the raw amino-acid sequence, 472 residues long: D-inositol 3-phosphate glycosyltransferase (472 aa).

1D-myo-inositol 3-phosphate is bound at residue H48. UDP-N-acetyl-alpha-D-glucosamine contacts are provided by residues 54-55 and G62; that span reads QP. 1D-myo-inositol 3-phosphate-binding positions include 59 to 64, K117, Y150, T174, and R194; that span reads DAGGMN. Positions 282, 287, and 348 each coordinate UDP-N-acetyl-alpha-D-glucosamine. 3 residues coordinate Mg(2+): F357, R358, and A360. 2 residues coordinate UDP-N-acetyl-alpha-D-glucosamine: E370 and E378. T384 serves as a coordination point for Mg(2+).

This sequence belongs to the glycosyltransferase group 1 family. MshA subfamily. Homodimer.

It catalyses the reaction 1D-myo-inositol 3-phosphate + UDP-N-acetyl-alpha-D-glucosamine = 1D-myo-inositol 2-acetamido-2-deoxy-alpha-D-glucopyranoside 3-phosphate + UDP + H(+). Functionally, catalyzes the transfer of a N-acetyl-glucosamine moiety to 1D-myo-inositol 3-phosphate to produce 1D-myo-inositol 2-acetamido-2-deoxy-glucopyranoside 3-phosphate in the mycothiol biosynthesis pathway. The sequence is that of D-inositol 3-phosphate glycosyltransferase from Streptomyces griseus subsp. griseus (strain JCM 4626 / CBS 651.72 / NBRC 13350 / KCC S-0626 / ISP 5235).